The chain runs to 428 residues: MGVWLKNGMSFNKDGELMRTHIKIEHGTIAAILYEQPLEANEEDVIDVGGRLIVPGLIDLHVHLREPGGEAKETIETGTLAAAKGGFTTVAAMPNTNPAPDRKEQMEWLQARIRETARVNVLPYAAITIGQKGEELTDFAALKEAGAFAFTDDGVGVQSAGMMFEAMKQAAALDMAIVAHCEDDTLTNGGAVHDGEFARRYGLRGIPSVCEAVHIARDVLLAEAAGCHYHVCHISTKESVRVVRDAKRAGIRVTAEVTPHHLLLCDEDIPGLDANYKMNPPLRSREDRDALIEGLLDGTIDFIATDHAPHTAAEKAKGIEAAPFGIVGLETAFPLLYTHFVKTGVFTLKQLVDWLTIKPAQCFGLKAGRLAVGAPADIAVIDLETEEAIDPETFASKGKNTPFAGWVCQGWPVMTFVGGTLVWEKGRA.

H61 and H63 together coordinate Zn(2+). Substrate is bound by residues 63 to 65 and N95; that span reads HLR. The Zn(2+) site is built by D153, H180, and H233. N279 is a binding site for substrate. D306 is a binding site for Zn(2+). D306 is an active-site residue. Residues H310 and 324 to 325 contribute to the substrate site; that span reads FG.

The protein belongs to the metallo-dependent hydrolases superfamily. DHOase family. Class I DHOase subfamily. It depends on Zn(2+) as a cofactor.

The enzyme catalyses (S)-dihydroorotate + H2O = N-carbamoyl-L-aspartate + H(+). It functions in the pathway pyrimidine metabolism; UMP biosynthesis via de novo pathway; (S)-dihydroorotate from bicarbonate: step 3/3. Functionally, catalyzes the reversible cyclization of carbamoyl aspartate to dihydroorotate. The chain is Dihydroorotase from Geobacillus kaustophilus (strain HTA426).